Here is a 706-residue protein sequence, read N- to C-terminus: Cyclic nucleotide-gated channel alpha-3 (706 aa).

Residues 1 to 189 (MAKISTQYSH…MDPSSNMYYH (189 aa)) are Cytoplasmic-facing. The disordered stretch occupies residues 113 to 177 (RESHVQFNVG…PKKEEKKKDS (65 aa)). Basic and acidic residues predominate over residues 147–177 (SEKDDKAKKEEKEKKEEKKENPKKEEKKKDS). The chain crosses the membrane as a helical span at residues 190-211 (WLTVIAVPVFYNWCLLVCRACF). Residues 212–217 (DELQSE) are Extracellular-facing. Residues 218–238 (HLMLWLVLDYSADILYGMDML) form a helical membrane-spanning segment. The Cytoplasmic segment spans residues 239–265 (VRARTGFLEQGLMVMDASRLWKHYTQT). The helical transmembrane segment at 266–285 (LHFKLDVLSLVPTDLAYFKL) threads the bilayer. Residues 286–289 (GMNY) are Extracellular-facing. Residues 290 to 307 (PELRFNRLLKLARLFEFF) form a helical membrane-spanning segment. The Cytoplasmic portion of the chain corresponds to 308 to 317 (DRTETRTNYP). The tract at residues 317–425 (PNMFRIGNLV…GNVGSMISNM (109 aa)) is ion conduction pathway. Residues 318–340 (NMFRIGNLVLYILIIIHWNACIY) traverse the membrane as a helical segment. Topologically, residues 341–366 (FAISKFIGFGTDSWVYPNVSNPEYGR) are extracellular. Asn-358 carries N-linked (GalNAc...) asparagine glycosylation. Helical transmembrane passes span 367-397 (LSRKYIYSLYWSTLTLTTIGETPPPVKDEEY) and 398-422 (LFVVIDFLVGVLIFATIVGNVGSMI). The interval 384-387 (TIGE) is selectivity filter. Topologically, residues 423–706 (SNMNASRAEF…DAPQTEASQP (284 aa)) are cytoplasmic. The segment at 427–504 (ASRAEFQAKI…TLRKVRIFQD (78 aa)) is C-linker. The tract at residues 507-627 (AGLLVELVLK…EEKGRQILMK (121 aa)) is cyclic nucleotide-binding domain. 6 residues coordinate 3',5'-cyclic GMP: Gly-567, Glu-568, Ser-570, Arg-583, Thr-584, and Asp-628. Residues 645 to 688 (IEEKVEHLETSLDSLQTRFARLLAEYNATQMKVKQRLSQLESQV) adopt a coiled-coil conformation. Residues 685 to 706 (ESQVKMGLPPDGDAPQTEASQP) are disordered.

Belongs to the cyclic nucleotide-gated cation channel (TC 1.A.1.5) family. CNGA3 subfamily. In terms of assembly, forms heterotetrameric channels composed of CNGA3 and CNGB3 subunits with 3:1 stoichiometry. As to expression, testis, kidney, retinal cone (at protein level) and heart.

It localises to the cell membrane. The enzyme catalyses Ca(2+)(in) = Ca(2+)(out). It catalyses the reaction Na(+)(in) = Na(+)(out). The catalysed reaction is K(+)(in) = K(+)(out). It carries out the reaction NH4(+)(in) = NH4(+)(out). The enzyme catalyses Rb(+)(in) = Rb(+)(out). It catalyses the reaction Li(+)(in) = Li(+)(out). The catalysed reaction is Cs(+)(in) = Cs(+)(out). With respect to regulation, ca(2+) influx is inhibited by extracellular Mg(2+) ions. In terms of biological role, pore-forming subunit of the cone cyclic nucleotide-gated channel. Mediates cone photoresponses at bright light converting transient changes in intracellular cGMP levels into electrical signals. In the dark, cGMP levels are high and keep the channel open enabling a steady inward current carried by Na(+) and Ca(2+) ions that leads to membrane depolarization and neurotransmitter release from synaptic terminals. Upon photon absorption cGMP levels decline leading to channel closure and membrane hyperpolarization that ultimately slows neurotransmitter release and signals the presence of light, the end point of the phototransduction cascade. Pore-forming subunit of the gustatory cyclic nucleotide-gated channel. In the taste buds, may sense oral extracellular pH and conduct ion currents that modulate the excitability of taste cells. Conducts cGMP- and cAMP-gated ion currents, with permeability for monovalent and divalent cations. In Bos taurus (Bovine), this protein is Cyclic nucleotide-gated channel alpha-3.